The sequence spans 381 residues: 1-deoxy-D-xylulose 5-phosphate reductoisomerase (381 aa).

NADPH is bound by residues Thr10, Gly11, Ser12, Ile13, Gly36, Lys37, Asn38, and Asn122. A 1-deoxy-D-xylulose 5-phosphate-binding site is contributed by Lys123. Position 124 (Glu124) interacts with NADPH. Asp148 lines the Mn(2+) pocket. The 1-deoxy-D-xylulose 5-phosphate site is built by Ser149, Glu150, Ser173, and His196. Glu150 serves as a coordination point for Mn(2+). Gly202 serves as a coordination point for NADPH. 1-deoxy-D-xylulose 5-phosphate-binding residues include Ser209, Asn214, Lys215, and Glu218. Glu218 serves as a coordination point for Mn(2+).

The protein belongs to the DXR family. Mg(2+) is required as a cofactor. It depends on Mn(2+) as a cofactor.

The enzyme catalyses 2-C-methyl-D-erythritol 4-phosphate + NADP(+) = 1-deoxy-D-xylulose 5-phosphate + NADPH + H(+). The protein operates within isoprenoid biosynthesis; isopentenyl diphosphate biosynthesis via DXP pathway; isopentenyl diphosphate from 1-deoxy-D-xylulose 5-phosphate: step 1/6. Its function is as follows. Catalyzes the NADPH-dependent rearrangement and reduction of 1-deoxy-D-xylulose-5-phosphate (DXP) to 2-C-methyl-D-erythritol 4-phosphate (MEP). The polypeptide is 1-deoxy-D-xylulose 5-phosphate reductoisomerase (Desulfitobacterium hafniense (strain DSM 10664 / DCB-2)).